Consider the following 277-residue polypeptide: 3-methyl-2-oxobutanoate hydroxymethyltransferase (277 aa).

Residues aspartate 43 and aspartate 82 each coordinate Mg(2+). Residues 43–44 (DS), aspartate 82, and lysine 112 each bind 3-methyl-2-oxobutanoate. Residue glutamate 114 participates in Mg(2+) binding. Residue glutamate 181 is the Proton acceptor of the active site.

The protein belongs to the PanB family. Homodecamer; pentamer of dimers. Mg(2+) serves as cofactor.

Its subcellular location is the cytoplasm. It catalyses the reaction 3-methyl-2-oxobutanoate + (6R)-5,10-methylene-5,6,7,8-tetrahydrofolate + H2O = 2-dehydropantoate + (6S)-5,6,7,8-tetrahydrofolate. The protein operates within cofactor biosynthesis; (R)-pantothenate biosynthesis; (R)-pantoate from 3-methyl-2-oxobutanoate: step 1/2. In terms of biological role, catalyzes the reversible reaction in which hydroxymethyl group from 5,10-methylenetetrahydrofolate is transferred onto alpha-ketoisovalerate to form ketopantoate. The sequence is that of 3-methyl-2-oxobutanoate hydroxymethyltransferase from Listeria monocytogenes serovar 1/2a (strain ATCC BAA-679 / EGD-e).